The following is a 620-amino-acid chain: MIKKIISVFLLLACIITSAFTAFFYHSKLSDQTKSISSLSSQQAQERLQSYQDSLDFYKKLNISLSVAIANSLRDKAVEELNAIALRIQENHGFIGVTFASLDGTMFTDIGTLDWNAKTLRRDWFVKTVELGTKHYTAFDIDKTTGQHVLTIATPVYVGNDIVGSVALDIAGDQIASPNGSGMFMMTDRNFNVFASDLTHSTLIGKDLTKEKPLFKNLVSGQYVTFSDADSHWFAVSQTEIDGENKLFTIIDIQQIVQTYKRDIQLIIAGFSGFSCVMLIGLYWVLSKELSGVRQIREWILSLSDGQIKERRPIKFHNELDTIAQSLENLQFRLLDVVRNSHRTMNDLSIKQTDITYSIEGNTNNSQQELGLIEQVATATTQLSCTSFDVMQQAQSAELNAETAQKLIAESHDIIDSSSKQTEMVTLSIHESQQIINQLREFSDNISSVTDVINNISDQTNLLALNAAIEAARAGEQGRGFAVVADEVRSLAVKTQQSTIDIQGIILKLQEQSQLADQVMTRNVSLIHETQVANRALIASFNLISDKVLEISNINSIVSTAANEQKIVTEDVAKQMEDIRYLVQENLSAMERTKQANQNISDLTTNLNDALSFFKIELTS.

Positions 344 to 580 constitute a Methyl-accepting transducer domain; that stretch reads TMNDLSIKQT…DVAKQMEDIR (237 aa).

The protein belongs to the methyl-accepting chemotaxis (MCP) protein family.

The protein resides in the cell inner membrane. Its function is as follows. May function as an environmental regulator of TCP biogenesis. Negatively regulates the synthesis of the major pilin subunit of TCP (TcpA). This is Toxin coregulated pilus biosynthesis protein I (tcpI) from Vibrio cholerae serotype O1 (strain ATCC 39541 / Classical Ogawa 395 / O395).